The primary structure comprises 53 residues: uncharacterized protein (53 aa).

Residues 1 to 10 show a composition bias toward polar residues; sequence MHILTRSSKN. Positions 1-25 are disordered; the sequence is MHILTRSSKNAFPRSRSRQDIHISS.

This is an uncharacterized protein from Saccharomyces cerevisiae (strain ATCC 204508 / S288c) (Baker's yeast).